The primary structure comprises 235 residues: UPF0758 protein Swol_1642 (235 aa).

One can recognise an MPN domain in the interval isoleucine 109–isoleucine 235. Zn(2+)-binding residues include histidine 184, histidine 186, and aspartate 197. The short motif at histidine 184–aspartate 197 is the JAMM motif element.

The protein belongs to the UPF0758 family.

This is UPF0758 protein Swol_1642 from Syntrophomonas wolfei subsp. wolfei (strain DSM 2245B / Goettingen).